The chain runs to 141 residues: Hemoglobin subunit alpha-A (141 aa).

Residues 1-141 form the Globin domain; that stretch reads VLSAADKNNV…VGNVLTAKYR (141 aa). H58 serves as a coordination point for O2. Residue H87 coordinates heme b.

This sequence belongs to the globin family. In terms of assembly, heterotetramer of two alpha chains and two beta chains. Red blood cells.

Involved in oxygen transport from the lung to the various peripheral tissues. This chain is Hemoglobin subunit alpha-A (HBAA), found in Francolinus pondicerianus (Grey francolin).